Consider the following 412-residue polypeptide: 4-hydroxy-3-methylbut-2-en-1-yl diphosphate synthase (ferredoxin) (412 aa).

Over residues 1–12 (MQTLDRPNAPSQ) the composition is skewed to polar residues. Residues 1–22 (MQTLDRPNAPSQQPYPEPVYPR) are disordered. The [4Fe-4S] cluster site is built by Cys-314, Cys-317, Cys-348, and Glu-355.

The protein belongs to the IspG family. [4Fe-4S] cluster serves as cofactor.

It catalyses the reaction (2E)-4-hydroxy-3-methylbut-2-enyl diphosphate + 2 oxidized [2Fe-2S]-[ferredoxin] + H2O = 2-C-methyl-D-erythritol 2,4-cyclic diphosphate + 2 reduced [2Fe-2S]-[ferredoxin] + H(+). It functions in the pathway isoprenoid biosynthesis; isopentenyl diphosphate biosynthesis via DXP pathway; isopentenyl diphosphate from 1-deoxy-D-xylulose 5-phosphate: step 5/6. In terms of biological role, converts 2C-methyl-D-erythritol 2,4-cyclodiphosphate (ME-2,4cPP) into 1-hydroxy-2-methyl-2-(E)-butenyl 4-diphosphate. The protein is 4-hydroxy-3-methylbut-2-en-1-yl diphosphate synthase (ferredoxin) of Synechococcus sp. (strain JA-3-3Ab) (Cyanobacteria bacterium Yellowstone A-Prime).